The following is a 328-amino-acid chain: Versiconal hemiacetal acetate esterase (328 aa).

An Involved in the stabilization of the negatively charged intermediate by the formation of the oxyanion hole motif is present at residues 82–84 (HGG). Catalysis depends on residues Ser-156, Asp-260, and His-290.

This sequence belongs to the 'GDXG' lipolytic enzyme family.

The catalysed reaction is (2S,3S)-versiconal hemiacetal acetate + H2O = (2S-3S)-versiconal hemiacetal + acetate + H(+). The enzyme catalyses (3S)-versiconol acetate + H2O = (S)-versiconol + acetate + H(+). The protein operates within mycotoxin biosynthesis. Functionally, versiconal hemiacetal acetate esterase; part of the fragmented gene cluster that mediates the biosynthesis of dothistromin (DOTH), a polyketide toxin very similar in structure to the aflatoxin precursor, versicolorin B. The first step of the pathway is the conversion of acetate to norsolorinic acid (NOR) and requires the fatty acid synthase subunits hexA and hexB, as well as the polyketide synthase pksA. PksA combines a hexanoyl starter unit and 7 malonyl-CoA extender units to synthesize the precursor NOR. The hexanoyl starter unit is provided to the acyl-carrier protein (ACP) domain by the fungal fatty acid synthase hexA/hexB. The second step is the conversion of NOR to averantin (AVN) and requires the norsolorinic acid ketoreductase nor1, which catalyzes the dehydration of norsolorinic acid to form (1'S)-averantin. The cytochrome P450 monooxygenase avnA then catalyzes the hydroxylation of AVN to 5'hydroxyaverantin (HAVN). The next step is performed by adhA that transforms HAVN to averufin (AVF). Averufin might then be converted to hydroxyversicolorone by cypX and avfA. Hydroxyversicolorone is further converted versiconal hemiacetal acetate (VHA) by moxY. VHA is then the substrate for the versiconal hemiacetal acetate esterase est1 to yield versiconal (VAL). Versicolorin B synthase vbsA then converts VAL to versicolorin B (VERB) by closing the bisfuran ring. Then, the activity of the versicolorin B desaturase verB leads to versicolorin A (VERA). DotB, a predicted chloroperoxidase, may perform epoxidation of the A-ring of VERA. Alternatively, a cytochrome P450, such as cypX or avnA could catalyze this step. It is also possible that another, uncharacterized, cytochrome P450 enzyme is responsible for this step. Opening of the epoxide could potentially be achieved by the epoxide hydrolase epoA. However, epoA seems not to be required for DOTH biosynthesis, but other epoxide hydrolases may have the ability to complement this hydrolysis. Alternatively, opening of the epoxide ring could be achieved non-enzymatically. The next step is the deoxygenation of ring A to yield the 5,8-dihydroxyanthraquinone which is most likely catalyzed by the NADPH dehydrogenase encoded by ver1. The last stages of DOTH biosynthesis are proposed to involve hydroxylation of the bisfuran. OrdB and norB might have oxidative roles here. An alternative possibility is that cytochrome P450 monoogenases such as avnA and cypX might perform these steps in addition to previously proposed steps. This chain is Versiconal hemiacetal acetate esterase, found in Dothistroma septosporum (strain NZE10 / CBS 128990) (Red band needle blight fungus).